A 127-amino-acid polypeptide reads, in one-letter code: MARVKRAVNAHKKRRTVLERAKGYRGQRSRLYRKAKEQLLHSFNYNYRDRKARKGDFRKLWIQRINIAVRNEGITYNRFIQGLRLAGIELDRRALAELAVNDPDTFKTIVEQAKAALPEDVNAPVNA.

It belongs to the bacterial ribosomal protein bL20 family.

Binds directly to 23S ribosomal RNA and is necessary for the in vitro assembly process of the 50S ribosomal subunit. It is not involved in the protein synthesizing functions of that subunit. This Bifidobacterium animalis subsp. lactis (strain AD011) protein is Large ribosomal subunit protein bL20.